Reading from the N-terminus, the 938-residue chain is Isoleucine--tRNA ligase (938 aa).

The short motif at 58 to 68 is the 'HIGH' region element; sequence PYANGSIHIGH. An N6-acetyllysine modification is found at K183. E561 is an L-isoleucyl-5'-AMP binding site. The 'KMSKS' region signature appears at 602 to 606; sequence KMSKS. K605 contacts ATP. Zn(2+) is bound by residues C901, C904, C921, and C924.

Belongs to the class-I aminoacyl-tRNA synthetase family. IleS type 1 subfamily. Monomer. Zn(2+) serves as cofactor.

It localises to the cytoplasm. The catalysed reaction is tRNA(Ile) + L-isoleucine + ATP = L-isoleucyl-tRNA(Ile) + AMP + diphosphate. Functionally, catalyzes the attachment of isoleucine to tRNA(Ile). As IleRS can inadvertently accommodate and process structurally similar amino acids such as valine, to avoid such errors it has two additional distinct tRNA(Ile)-dependent editing activities. One activity is designated as 'pretransfer' editing and involves the hydrolysis of activated Val-AMP. The other activity is designated 'posttransfer' editing and involves deacylation of mischarged Val-tRNA(Ile). This chain is Isoleucine--tRNA ligase, found in Shigella boydii serotype 4 (strain Sb227).